Reading from the N-terminus, the 559-residue chain is Dihydroxy-acid dehydratase (559 aa).

Residue C49 participates in [2Fe-2S] cluster binding. Position 81 (D81) interacts with Mg(2+). A [2Fe-2S] cluster-binding site is contributed by C122. Mg(2+) is bound by residues D123 and K124. Residue K124 is modified to N6-carboxylysine. C194 is a binding site for [2Fe-2S] cluster. E446 contributes to the Mg(2+) binding site. The Proton acceptor role is filled by S472.

The protein belongs to the IlvD/Edd family. In terms of assembly, homodimer. [2Fe-2S] cluster serves as cofactor. Requires Mg(2+) as cofactor.

It catalyses the reaction (2R)-2,3-dihydroxy-3-methylbutanoate = 3-methyl-2-oxobutanoate + H2O. The enzyme catalyses (2R,3R)-2,3-dihydroxy-3-methylpentanoate = (S)-3-methyl-2-oxopentanoate + H2O. It participates in amino-acid biosynthesis; L-isoleucine biosynthesis; L-isoleucine from 2-oxobutanoate: step 3/4. It functions in the pathway amino-acid biosynthesis; L-valine biosynthesis; L-valine from pyruvate: step 3/4. In terms of biological role, functions in the biosynthesis of branched-chain amino acids. Catalyzes the dehydration of (2R,3R)-2,3-dihydroxy-3-methylpentanoate (2,3-dihydroxy-3-methylvalerate) into 2-oxo-3-methylpentanoate (2-oxo-3-methylvalerate) and of (2R)-2,3-dihydroxy-3-methylbutanoate (2,3-dihydroxyisovalerate) into 2-oxo-3-methylbutanoate (2-oxoisovalerate), the penultimate precursor to L-isoleucine and L-valine, respectively. In Prochlorococcus marinus (strain MIT 9515), this protein is Dihydroxy-acid dehydratase.